A 183-amino-acid polypeptide reads, in one-letter code: ATP synthase subunit delta (183 aa).

This sequence belongs to the ATPase delta chain family. In terms of assembly, F-type ATPases have 2 components, F(1) - the catalytic core - and F(0) - the membrane proton channel. F(1) has five subunits: alpha(3), beta(3), gamma(1), delta(1), epsilon(1). F(0) has three main subunits: a(1), b(2) and c(10-14). The alpha and beta chains form an alternating ring which encloses part of the gamma chain. F(1) is attached to F(0) by a central stalk formed by the gamma and epsilon chains, while a peripheral stalk is formed by the delta and b chains.

It localises to the cell inner membrane. F(1)F(0) ATP synthase produces ATP from ADP in the presence of a proton or sodium gradient. F-type ATPases consist of two structural domains, F(1) containing the extramembraneous catalytic core and F(0) containing the membrane proton channel, linked together by a central stalk and a peripheral stalk. During catalysis, ATP synthesis in the catalytic domain of F(1) is coupled via a rotary mechanism of the central stalk subunits to proton translocation. In terms of biological role, this protein is part of the stalk that links CF(0) to CF(1). It either transmits conformational changes from CF(0) to CF(1) or is implicated in proton conduction. This is ATP synthase subunit delta from Maridesulfovibrio salexigens (strain ATCC 14822 / DSM 2638 / NCIMB 8403 / VKM B-1763) (Desulfovibrio salexigens).